The following is an 80-amino-acid chain: Small ribosomal subunit protein bS21 (80 aa).

Belongs to the bacterial ribosomal protein bS21 family.

The sequence is that of Small ribosomal subunit protein bS21 from Rhodospirillum rubrum (strain ATCC 11170 / ATH 1.1.1 / DSM 467 / LMG 4362 / NCIMB 8255 / S1).